Consider the following 548-residue polypeptide: ATP synthase subunit alpha (548 aa).

172–179 (GDRKTGKT) provides a ligand contact to ATP.

Belongs to the ATPase alpha/beta chains family. In terms of assembly, F-type ATPases have 2 components, CF(1) - the catalytic core - and CF(0) - the membrane proton channel. CF(1) has five subunits: alpha(3), beta(3), gamma(1), delta(1), epsilon(1). CF(0) has three main subunits: a(1), b(2) and c(9-12). The alpha and beta chains form an alternating ring which encloses part of the gamma chain. CF(1) is attached to CF(0) by a central stalk formed by the gamma and epsilon chains, while a peripheral stalk is formed by the delta and b chains.

The protein resides in the cell membrane. It carries out the reaction ATP + H2O + 4 H(+)(in) = ADP + phosphate + 5 H(+)(out). Produces ATP from ADP in the presence of a proton gradient across the membrane. The alpha chain is a regulatory subunit. This chain is ATP synthase subunit alpha, found in Mycolicibacterium smegmatis (strain ATCC 700084 / mc(2)155) (Mycobacterium smegmatis).